Reading from the N-terminus, the 39-residue chain is uncharacterized protein (39 aa).

This is an uncharacterized protein from Dictyostelium discoideum (Social amoeba).